Here is a 216-residue protein sequence, read N- to C-terminus: Ribosomal RNA small subunit methyltransferase G (216 aa).

S-adenosyl-L-methionine contacts are provided by residues glycine 83, methionine 88, 134-135, and arginine 149; that span reads VE.

Belongs to the methyltransferase superfamily. RNA methyltransferase RsmG family.

The protein resides in the cytoplasm. The enzyme catalyses guanosine(527) in 16S rRNA + S-adenosyl-L-methionine = N(7)-methylguanosine(527) in 16S rRNA + S-adenosyl-L-homocysteine. In terms of biological role, specifically methylates the N7 position of guanine in position 527 of 16S rRNA. In Pseudomonas putida (strain ATCC 700007 / DSM 6899 / JCM 31910 / BCRC 17059 / LMG 24140 / F1), this protein is Ribosomal RNA small subunit methyltransferase G.